The sequence spans 139 residues: ATP synthase epsilon chain (139 aa).

Belongs to the ATPase epsilon chain family. In terms of assembly, F-type ATPases have 2 components, CF(1) - the catalytic core - and CF(0) - the membrane proton channel. CF(1) has five subunits: alpha(3), beta(3), gamma(1), delta(1), epsilon(1). CF(0) has three main subunits: a, b and c.

Its subcellular location is the cell inner membrane. Produces ATP from ADP in the presence of a proton gradient across the membrane. The protein is ATP synthase epsilon chain of Pseudomonas putida (strain GB-1).